We begin with the raw amino-acid sequence, 387 residues long: Zinc finger protein neuro-d4 (387 aa).

Glycyl lysine isopeptide (Lys-Gly) (interchain with G-Cter in SUMO2) cross-links involve residues lysine 106, lysine 129, and lysine 133. The C2H2-type zinc-finger motif lies at 195–218 (YVCDICGKRYKNRPGLSYHYTHTH). PHD-type zinc fingers lie at residues 271 to 328 (NGYC…CKSC) and 325 to 375 (CKSC…CLRH). The Zn(2+) site is built by cysteine 274, cysteine 277, cysteine 293, cysteine 296, histidine 301, cysteine 304, cysteine 322, cysteine 325, cysteine 328, cysteine 331, cysteine 343, cysteine 346, histidine 351, cysteine 354, cysteine 369, and cysteine 372.

Belongs to the requiem/DPF family. As to quaternary structure, component of neuron-specific chromatin remodeling complex (nBAF complex) composed of at least, ARID1A/BAF250A or ARID1B/BAF250B, SMARCD1/BAF60A, SMARCD3/BAF60C, SMARCA2/BRM/BAF190B, SMARCA4/BRG1/BAF190A, SMARCB1/BAF47, SMARCC1/BAF155, SMARCE1/BAF57, SMARCC2/BAF170, DPF1/BAF45B, DPF3/BAF45C, ACTL6B/BAF53B and actin. In terms of tissue distribution, at embryonic stages, predominant expression in the nervous system. Expressed specifically in postmitotic neurons (at protein level).

The protein resides in the cytoplasm. It localises to the nucleus. Functionally, may have an important role in developing neurons by participating in regulation of cell survival, possibly as a neurospecific transcription factor. Belongs to the neuron-specific chromatin remodeling complex (nBAF complex). During neural development a switch from a stem/progenitor to a postmitotic chromatin remodeling mechanism occurs as neurons exit the cell cycle and become committed to their adult state. The transition from proliferating neural stem/progenitor cells to postmitotic neurons requires a switch in subunit composition of the npBAF and nBAF complexes. As neural progenitors exit mitosis and differentiate into neurons, npBAF complexes which contain ACTL6A/BAF53A and PHF10/BAF45A, are exchanged for homologous alternative ACTL6B/BAF53B and DPF1/BAF45B or DPF3/BAF45C subunits in neuron-specific complexes (nBAF). The npBAF complex is essential for the self-renewal/proliferative capacity of the multipotent neural stem cells. The nBAF complex along with CREST plays a role regulating the activity of genes essential for dendrite growth. This Mus musculus (Mouse) protein is Zinc finger protein neuro-d4.